Consider the following 1399-residue polypeptide: DNA-directed RNA polymerase subunit beta' (1399 aa).

Zn(2+) contacts are provided by cysteine 70, cysteine 72, cysteine 85, and cysteine 88. Positions 460, 462, and 464 each coordinate Mg(2+). Cysteine 814, cysteine 888, cysteine 895, and cysteine 898 together coordinate Zn(2+).

It belongs to the RNA polymerase beta' chain family. The RNAP catalytic core consists of 2 alpha, 1 beta, 1 beta' and 1 omega subunit. When a sigma factor is associated with the core the holoenzyme is formed, which can initiate transcription. It depends on Mg(2+) as a cofactor. Requires Zn(2+) as cofactor.

The catalysed reaction is RNA(n) + a ribonucleoside 5'-triphosphate = RNA(n+1) + diphosphate. DNA-dependent RNA polymerase catalyzes the transcription of DNA into RNA using the four ribonucleoside triphosphates as substrates. This Pseudomonas putida (strain ATCC 700007 / DSM 6899 / JCM 31910 / BCRC 17059 / LMG 24140 / F1) protein is DNA-directed RNA polymerase subunit beta'.